Reading from the N-terminus, the 613-residue chain is Myosin light chain kinase 2, skeletal/cardiac muscle (613 aa).

Residues 1-20 (MTTENGAVELGSQSLSTEQT) show a composition bias toward polar residues. Residues 1–168 (MTTENGAVEL…RGSPAFLHSP (168 aa)) form a disordered region. Residues 32 to 55 (SEKEPSAPATEKDLSPPNAKKDPG) show a composition bias toward basic and acidic residues. Over residues 56–66 (APDPKNNPDPP) the composition is skewed to pro residues. Basic and acidic residues predominate over residues 67-83 (SLKKDPAKAPGPEKKGD). Gly residues predominate over residues 95 to 105 (SGEGDGGGGPA). The span at 106–122 (EGSEGPPAALPLPTATA) shows a compositional bias: low complexity. Over residues 145–158 (KAGKKAAECREAGR) the composition is skewed to basic and acidic residues. Phosphoserine is present on residues S161, S167, and S169. The disordered stretch occupies residues 219-240 (EKKKEEAEKASGQAGQAKVQGD). The Protein kinase domain maps to 302–557 (MNSKEALGGG…AEQCLAHPWL (256 aa)). Residues 308–316 (LGGGKFGAV) and K331 contribute to the ATP site. Residue D423 is the Proton acceptor of the active site. The residue at position 462 (T462) is a Phosphothreonine. The calmodulin-binding stretch occupies residues 591–603 (IAVSAANRFKKIS).

Belongs to the protein kinase superfamily. CAMK Ser/Thr protein kinase family. May interact with centrin.

The protein localises to the cytoplasm. The catalysed reaction is L-seryl-[myosin light chain] + ATP = O-phospho-L-seryl-[myosin light chain] + ADP + H(+). It catalyses the reaction L-threonyl-[myosin light chain] + ATP = O-phospho-L-threonyl-[myosin light chain] + ADP + H(+). Implicated in the level of global muscle contraction and cardiac function. Phosphorylates a specific serine in the N-terminus of a myosin light chain. This chain is Myosin light chain kinase 2, skeletal/cardiac muscle (Mylk2), found in Mus musculus (Mouse).